Here is a 496-residue protein sequence, read N- to C-terminus: SRCTHLENRDFVTGTQGTTRVTLVLELGGCVTITAEGKPSMDVWLDAIYQESPAKTREYCLHAKLSETKVAARCPTMGPAVLTEERQIGTVCKRDQSDRGWGNHCGLFGKGSIVACVKAACEAKKKATGYVYDANKIVYTVKVEPHTGDYVAANETHKGRKTATFTVSSEKTILTLGEYGDVSLLCRVASGVDLAQTIILELDKTAEHLPTAWQVHRDWFNDLALPWKHDGNPHWNNAERLVEFGAPHAVKMDVYNLGDQTGVLLKALAGVPVAHIEGNKYHLKSGHVTCEVGLEKLKMKGLTYTMCDKSKFAWKRTPTDSGHDTVVMEVTFSGSKPCRIPVRAVAHGSPDVNVAMLITPNPTIENDGGGFIEMQLPPGDNIIYVGELSHQWFQTGSSIGRVFQTTRKGIERLTVIGEHAWDFGSAGGFFSSIGKAVHTVLGGAFNSIFGGVGFLPKLLMGVALAWLGLNTRNPTMSMSFLMAGGLVLAMTLGVGA.

The Extracellular portion of the chain corresponds to 1–447 (SRCTHLENRD…HTVLGGAFNS (447 aa)). Disulfide bonds link Cys3–Cys30, Cys60–Cys116, Cys60–Cys121, Cys74–Cys105, Cys92–Cys116, and Cys92–Cys121. The fusion peptide stretch occupies residues 98 to 111 (DRGWGNHCGLFGKG). N-linked (GlcNAc...) asparagine; by host glycosylation is present at Asn154. 2 disulfide bridges follow: Cys186–Cys290 and Cys307–Cys338. Residues 448–468 (IFGGVGFLPKLLMGVALAWLG) traverse the membrane as a helical segment. Topologically, residues 469 to 479 (LNTRNPTMSMS) are cytoplasmic. A helical membrane pass occupies residues 480-496 (FLMAGGLVLAMTLGVGA).

Homodimer; in the endoplasmic reticulum and Golgi. Post-translationally, N-glycosylated.

It localises to the virion membrane. It is found in the host endoplasmic reticulum membrane. Binds to host cell surface receptor and mediates fusion between viral and cellular membranes. Envelope protein is synthesized in the endoplasmic reticulum in the form of heterodimer with protein prM. They play a role in virion budding in the ER, and the newly formed immature particle is covered with 60 spikes composed of heterodimer between precursor prM and envelope protein E. The virion is transported to the Golgi apparatus where the low pH causes dissociation of PrM-E heterodimers and formation of E homodimers. prM-E cleavage is ineficient, and many virions are only partially matured. These uncleaved prM would play a role in immune evasion. The protein is Genome polyprotein of Bos taurus (Bovine).